The sequence spans 271 residues: Short-chain dehydrogenase PC-15 (271 aa).

Positions 8, 34, 40, 56, 84, 148, 152, 181, and 183 each coordinate NADP(+). Y148 acts as the Proton acceptor in catalysis. K152 serves as the catalytic Lowers pKa of active site Tyr.

Belongs to the short-chain dehydrogenases/reductases (SDR) family.

Its pathway is secondary metabolite biosynthesis. Its function is as follows. Short-chain dehydrogenase; part of the gene cluster that mediates the biosynthesis of the indole diterpenes penitrems. The geranylgeranyl diphosphate (GGPP) synthase penG catalyzes the first step in penitrem biosynthesis via conversion of farnesyl pyrophosphate and isopentyl pyrophosphate into geranylgeranyl pyrophosphate (GGPP). Condensation of indole-3-glycerol phosphate with GGPP by the prenyl transferase penC then forms 3-geranylgeranylindole (3-GGI). Epoxidation by the FAD-dependent monooxygenase penM leads to a epoxidized-GGI that is substrate of the terpene cyclase penB for cyclization to yield paspaline. Paspaline is subsequently converted to 13-desoxypaxilline by the cytochrome P450 monooxygenase penP, the latter being then converted to paxilline by the cytochrome P450 monooxygenase penQ. Paxilline is converted to beta-paxitriol via C-10 ketoreduction by the short-chain dehydrogenase PC-15 which can be monoprenylated at the C-20 by the indole diterpene prenyltransferase penD. A two-step elimination (acetylation and elimination) process performed by the O-acetyltransferase PC-16 and the P.simplicissimum ptmI-ortholog not yet identified in P.crustosum, leads to the production of the prenylated form of penijanthine. The FAD-linked oxidoreductase ptmO then converts the prenylated form of penijanthine into PC-M5 which is in turn transformed into PC-M4 by the aromatic dimethylallyltransferase PC-22. A series of oxidation steps involving 4 cytochrome P450 monooxygenases (PC-21, PC-05, PC-23, PC-20) and a FAD-dependent monooxygenase (PC-14) are required for the transformation of PC-M4 to penitrems A and E. Synthesis of these final products is proposed to proceed via penitrems D and C (PC-21, PC-05, PC-14) and penitrems B and F (PC-21, PC-05, PC-14, PC-23). The sequence is that of Short-chain dehydrogenase PC-15 from Penicillium crustosum (Blue mold fungus).